We begin with the raw amino-acid sequence, 251 residues long: Triosephosphate isomerase (251 aa).

Substrate is bound at residue 9–11; the sequence is NWK. Histidine 95 (electrophile) is an active-site residue. Glutamate 167 acts as the Proton acceptor in catalysis. Residues glycine 173, serine 213, and 234 to 235 contribute to the substrate site; that span reads GG. Residue serine 213 is modified to Phosphoserine.

It belongs to the triosephosphate isomerase family. In terms of assembly, homodimer.

Its subcellular location is the cytoplasm. It carries out the reaction D-glyceraldehyde 3-phosphate = dihydroxyacetone phosphate. The protein operates within carbohydrate biosynthesis; gluconeogenesis. It participates in carbohydrate degradation; glycolysis; D-glyceraldehyde 3-phosphate from glycerone phosphate: step 1/1. In terms of biological role, involved in the gluconeogenesis. Catalyzes stereospecifically the conversion of dihydroxyacetone phosphate (DHAP) to D-glyceraldehyde-3-phosphate (G3P). The chain is Triosephosphate isomerase from Bacillus cereus (strain ATCC 10987 / NRS 248).